Here is a 238-residue protein sequence, read N- to C-terminus: Green fluorescent protein (238 aa).

Residues 65–67 constitute a cross-link (5-imidazolinone (Ser-Gly)); sequence SYG. Y66 is subject to (Z)-2,3-didehydrotyrosine.

It belongs to the GFP family. As to quaternary structure, monomer. Contains a chromophore consisting of modified amino acid residues. The chromophore is formed by autocatalytic backbone condensation between Ser-65 and Gly-67, and oxidation of Tyr-66 to didehydrotyrosine. Maturation of the chromophore requires nothing other than molecular oxygen. Photocytes.

Its function is as follows. Energy-transfer acceptor. Its role is to transduce the blue chemiluminescence of the protein aequorin into green fluorescent light by energy transfer. Fluoresces in vivo upon receiving energy from the Ca(2+)-activated photoprotein aequorin. This Aequorea victoria (Water jellyfish) protein is Green fluorescent protein (GFP).